The following is a 327-amino-acid chain: uncharacterized protein (327 aa).

Positions 1–23 are cleaved as a signal peptide; it reads MGGGRLPPLWLPLLIAWSEWGNC. 2 N-linked (GlcNAc...) asparagine; by host glycosylation sites follow: N144 and N239. Residues 298 to 327 are disordered; it reads EESEAAEETAAGEASAVAAAAVSEEEQRRE. The segment covering 305–319 has biased composition (low complexity); it reads ETAAGEASAVAAAAV.

This is an uncharacterized protein from Human cytomegalovirus (strain AD169) (HHV-5).